A 188-amino-acid chain; its full sequence is Dual specificity protein phosphatase 18 (188 aa).

Residues 19-160 (GLSQITSSLY…LIHYEFQLFG (142 aa)) enclose the Tyrosine-protein phosphatase domain. A sufficient for mitochondrial localization region spans residues 95–141 (MKQGRTLLHCAAGVSRSAALCLAYLMKYHAMSLLDAHTWTKSCRPII). C104 acts as the Phosphocysteine intermediate in catalysis.

The protein belongs to the protein-tyrosine phosphatase family. Non-receptor class dual specificity subfamily.

It is found in the cytoplasm. The protein resides in the nucleus. The protein localises to the mitochondrion inner membrane. The catalysed reaction is O-phospho-L-tyrosyl-[protein] + H2O = L-tyrosyl-[protein] + phosphate. It catalyses the reaction O-phospho-L-seryl-[protein] + H2O = L-seryl-[protein] + phosphate. It carries out the reaction O-phospho-L-threonyl-[protein] + H2O = L-threonyl-[protein] + phosphate. Can dephosphorylate single and diphosphorylated synthetic MAPK peptides, with preference for the phosphotyrosine and diphosphorylated forms over phosphothreonine. In vitro, dephosphorylates p-nitrophenyl phosphate (pNPP). The chain is Dual specificity protein phosphatase 18 (DUSP18) from Bos taurus (Bovine).